Here is a 43-residue protein sequence, read N- to C-terminus: Protein PsbN (43 aa).

A helical transmembrane segment spans residues 5-27 (TVLSIFISSLLLGITGYSIYTAF).

It belongs to the PsbN family.

The protein localises to the plastid. It localises to the chloroplast thylakoid membrane. In terms of biological role, may play a role in photosystem I and II biogenesis. In Porphyra purpurea (Red seaweed), this protein is Protein PsbN.